Reading from the N-terminus, the 383-residue chain is Putative glutamate--cysteine ligase 2-2 (383 aa).

The protein belongs to the glutamate--cysteine ligase type 2 family. YbdK subfamily.

It carries out the reaction L-cysteine + L-glutamate + ATP = gamma-L-glutamyl-L-cysteine + ADP + phosphate + H(+). Its function is as follows. ATP-dependent carboxylate-amine ligase which exhibits weak glutamate--cysteine ligase activity. The sequence is that of Putative glutamate--cysteine ligase 2-2 from Legionella pneumophila (strain Paris).